The following is a 232-amino-acid chain: Multiple organellar RNA editing factor 6, mitochondrial (232 aa).

The N-terminal 67 residues, methionine 1–glycine 67, are a transit peptide targeting the mitochondrion. The segment at threonine 208–arginine 232 is disordered. Residues glycine 212–arginine 232 are compositionally biased toward basic and acidic residues.

This sequence belongs to the MORF family. Heterodimers with MORF8/RIP1, MORF3/RIP3, MORF6/RIP6, MORF7/RIP7 and MORF9/RIP9.

The protein localises to the mitochondrion. Functionally, involved in organellar RNA editing. Required for the processing of few RNA editing sites in mitochondria. This Arabidopsis thaliana (Mouse-ear cress) protein is Multiple organellar RNA editing factor 6, mitochondrial.